The sequence spans 307 residues: Cyclin-dependent kinase 5 activator 1 (307 aa).

Gly-2 carries N-myristoyl glycine lipidation. A Phosphoserine; by CDK5 modification is found at Ser-8. Residues 97–136 are disordered; sequence TFAQPPPAQPPAPPASQLSGSQTGGSSSVKKAPHPAVTSA. Residues 100–110 are compositionally biased toward pro residues; sequence QPPPAQPPAPP. The segment covering 111-124 has biased composition (low complexity); it reads ASQLSGSQTGGSSS. Thr-138 is subject to Phosphothreonine; by CDK5.

This sequence belongs to the cyclin-dependent kinase 5 activator family. Heterodimer composed of a catalytic subunit CDK5 and a regulatory subunit CDK5R1 (p25) and macromolecular complex composed of at least CDK5, CDK5R1 (p35) and CDK5RAP1 or CDK5RAP2 or CDK5RAP3. Only the heterodimer shows kinase activity. Interacts with EPHA4 and NGEF; may mediate the activation of NGEF by EPHA4. Interacts with RASGRF2. The complex p35/CDK5 interacts with CLOCK. In terms of processing, the p35 form is proteolytically cleaved by calpain, giving rise to the p25 form. P35 has a 5 to 10 fold shorter half-life compared to p25. The conversion results in deregulation of the CDK5 kinase: p25/CDK5 kinase displays an increased and altered tau phosphorylation in comparison to the p35/CDK5 kinase in vivo. Myristoylated. A proper myristoylation signal is essential for the proper distribution of p35. Post-translationally, ubiquitinated, leading to its degradation: degradation of p35 by proteasome results in down-regulation of CDK5 activity. During this process, CDK5 phosphorylates p35 and induces its ubiquitination and subsequent degradation. Ubiquitinated by the CRL2(FEM1B) complex, which recognizes the -Gly-Leu-Asp-Arg C-degron at the C-terminus, leading to its degradation. In terms of processing, phosphorylation at Ser-8 and Thr-138 by CDK5 prevents calpain-mediated proteolysis. In terms of tissue distribution, brain and neuron specific.

The protein localises to the cell membrane. It localises to the cell projection. Its subcellular location is the neuron projection. The protein resides in the nucleus. It is found in the cytoplasm. The protein localises to the perinuclear region. It localises to the perikaryon. In terms of biological role, p35 is a neuron specific activator of CDK5. The complex p35/CDK5 is required for neurite outgrowth and cortical lamination. Involved in dendritic spine morphogenesis by mediating the EFNA1-EPHA4 signaling. Activator of TPKII. The complex p35/CDK5 participates in the regulation of the circadian clock by modulating the function of CLOCK protein: phosphorylates CLOCK at 'Thr-451' and 'Thr-461' and regulates the transcriptional activity of the CLOCK-BMAL1 heterodimer in association with altered stability and subcellular distribution. The sequence is that of Cyclin-dependent kinase 5 activator 1 (CDK5R1) from Homo sapiens (Human).